The following is a 216-amino-acid chain: Large ribosomal subunit protein uL1y (216 aa).

This sequence belongs to the universal ribosomal protein uL1 family. In terms of assembly, interacts with the GTPase NUG2.

This Arabidopsis thaliana (Mouse-ear cress) protein is Large ribosomal subunit protein uL1y (RPL10AB).